We begin with the raw amino-acid sequence, 517 residues long: ATP synthase subunit beta (517 aa).

Composition is skewed to low complexity over residues 1 to 22 (MAKA…AAKA) and 29 to 42 (AKTA…APKA). A disordered region spans residues 1-42 (MAKAATPKTTAAAEAKPAAAKAPAKKAPAKTAAAKSDAAPKA). ATP is bound at residue 195 to 202 (GGAGVGKT).

This sequence belongs to the ATPase alpha/beta chains family. F-type ATPases have 2 components, CF(1) - the catalytic core - and CF(0) - the membrane proton channel. CF(1) has five subunits: alpha(3), beta(3), gamma(1), delta(1), epsilon(1). CF(0) has three main subunits: a(1), b(2) and c(9-12). The alpha and beta chains form an alternating ring which encloses part of the gamma chain. CF(1) is attached to CF(0) by a central stalk formed by the gamma and epsilon chains, while a peripheral stalk is formed by the delta and b chains.

The protein localises to the cell inner membrane. The enzyme catalyses ATP + H2O + 4 H(+)(in) = ADP + phosphate + 5 H(+)(out). Its function is as follows. Produces ATP from ADP in the presence of a proton gradient across the membrane. The catalytic sites are hosted primarily by the beta subunits. In Brucella anthropi (strain ATCC 49188 / DSM 6882 / CCUG 24695 / JCM 21032 / LMG 3331 / NBRC 15819 / NCTC 12168 / Alc 37) (Ochrobactrum anthropi), this protein is ATP synthase subunit beta.